Reading from the N-terminus, the 85-residue chain is Antitoxin VapB31 (85 aa).

In terms of biological role, antitoxin component of a type II toxin-antitoxin (TA) system. Upon expression in M.smegmatis neutralizes the effect of cognate toxin VapC31. The protein is Antitoxin VapB31 (vapB31) of Mycobacterium tuberculosis (strain ATCC 25618 / H37Rv).